We begin with the raw amino-acid sequence, 349 residues long: MCNQHQTRVLSVSHAKAKFEQTTIERRGLRPHDVLIDIKFSGICHSDIHSAFDEWGGGIFPMVPGHEIAGVVTAVGTKVTKLAVGDRVGVGCFVDSCGECEYCLNAEEQFCTKGVVQTYNSVDYDGNPTYGGYSQKIVVTDRFVVRIPDRLEMDVASPLLCAGITTYSPLKHWNVGPGKKVAIVGVGGLGHLAIQFAHAMGAEVTVLSRSMNKKEEALELGANHYFATSDPATFTALAGRFDVILNTVSANLDVDAYLSMLRIDGTLVSVGAPAKPDTYSVFSLIMGRRSIAGSLVGGIQETQEMLDFAAEHGIEPKIEVIGADQVDEAYERILRSDVRYRFVIDISTL.

Zn(2+)-binding residues include Cys44, His66, Cys97, Cys100, Cys103, Cys111, and Cys161.

It belongs to the zinc-containing alcohol dehydrogenase family. The cofactor is Zn(2+).

Its function is as follows. Functions in the protection against aldehyde-stress. This chain is Probable formaldehyde dehydrogenase AdhA (adhA), found in Bacillus subtilis (strain 168).